The sequence spans 217 residues: MSGRQDASHAGRARARMVERLRAQGIQDEGALAAMMQVPRHLFVEEGLAYSAYDDTALPIGFQQTISQPYVVARMIELLRSGGRQLGRVLEIGAGCGYQAAVLSTLATEVYAVERIRPLLDKARANLRPLRLPNVRLKHADGTLGLPEAAPFESIIVAAAAGGVPNALKEQLAPGGRLIIPVGGGEQRLLLIERQGNVFRESGYEAVRFVPLLAGTE.

The active site involves Ser-67.

The protein belongs to the methyltransferase superfamily. L-isoaspartyl/D-aspartyl protein methyltransferase family.

It localises to the cytoplasm. The enzyme catalyses [protein]-L-isoaspartate + S-adenosyl-L-methionine = [protein]-L-isoaspartate alpha-methyl ester + S-adenosyl-L-homocysteine. Functionally, catalyzes the methyl esterification of L-isoaspartyl residues in peptides and proteins that result from spontaneous decomposition of normal L-aspartyl and L-asparaginyl residues. It plays a role in the repair and/or degradation of damaged proteins. The sequence is that of Protein-L-isoaspartate O-methyltransferase from Azoarcus sp. (strain BH72).